Reading from the N-terminus, the 374-residue chain is uncharacterized protein (374 aa).

A helical transmembrane segment spans residues 27–49; that stretch reads AISPILALLIVLGVTIVVGAVFY.

Its subcellular location is the membrane. This is an uncharacterized protein from Methanocaldococcus jannaschii (strain ATCC 43067 / DSM 2661 / JAL-1 / JCM 10045 / NBRC 100440) (Methanococcus jannaschii).